The primary structure comprises 414 residues: Snake venom metalloproteinase (414 aa).

An N-terminal signal peptide occupies residues 1–20 (MIEVLLVTICLAVFPYQGSS). The propeptide occupies 21-190 (IILESGNVND…KASDLNFNSD (170 aa)). Pyrrolidone carboxylic acid is present on glutamine 191. Positions 197–393 (RYVELVIVAD…YKPQCILNKP (197 aa)) constitute a Peptidase M12B domain. Residues glutamate 200 and aspartate 284 each contribute to the Ca(2+) site. 2 disulfide bridges follow: cysteine 308-cysteine 388 and cysteine 348-cysteine 355. Histidine 333 provides a ligand contact to Zn(2+). The active site involves glutamate 334. Zn(2+) contacts are provided by histidine 337 and histidine 343. Ca(2+)-binding residues include cysteine 388 and asparagine 391. The propeptide occupies 394 to 414 (LRIDPVSTPVSGNELLEAGEE).

It belongs to the venom metalloproteinase (M12B) family. P-I subfamily. Monomer. It depends on Zn(2+) as a cofactor. As to expression, expressed by the venom gland.

The protein resides in the secreted. Functionally, snake venom metalloproteinase that impairs hemostasis in the envenomed animal. This chain is Snake venom metalloproteinase, found in Crotalus molossus molossus (Northern black-tailed rattlesnake).